The chain runs to 704 residues: Phosphatidylinositol-3,5-bisphosphate 3-phosphatase MTMR8 (704 aa).

Residues 126 to 500 form the Myotubularin phosphatase domain; sequence GWKLIDPISD…YNIQFWCGMY (375 aa). Asn250, Asn275, and Ile276 together coordinate a 1,2-diacyl-sn-glycero-3-phospho-(1D-myo-inositol-3,5-bisphosphate). The a 1,2-diacyl-sn-glycero-3-phospho-(1D-myo-inositol-3-phosphate) site is built by Asn250, Asn275, and Ile276. The active-site Phosphocysteine intermediate is Cys338. The a 1,2-diacyl-sn-glycero-3-phospho-(1D-myo-inositol-3,5-bisphosphate) site is built by Ser339, Asp340, Gly341, Trp342, Asp343, Arg344, Lys380, and Arg384. Ser339, Asp340, Gly341, Trp342, Asp343, and Arg344 together coordinate a 1,2-diacyl-sn-glycero-3-phospho-(1D-myo-inositol-3-phosphate). Phosphate contacts are provided by Ser339 and Asp340. Phosphate is bound by residues Trp342, Asp343, and Arg344. Arg384 lines the a 1,2-diacyl-sn-glycero-3-phospho-(1D-myo-inositol-3-phosphate) pocket. A coiled-coil region spans residues 515-541; sequence ESLLEIKKQRAMLETDVHELEKKLKVR.

This sequence belongs to the protein-tyrosine phosphatase family. Non-receptor class myotubularin subfamily. As to quaternary structure, homodimer. Heterodimer with MTMR9.

It is found in the nucleus envelope. The catalysed reaction is a 1,2-diacyl-sn-glycero-3-phospho-(1D-myo-inositol-3,5-bisphosphate) + H2O = a 1,2-diacyl-sn-glycero-3-phospho-(1D-myo-inositol-5-phosphate) + phosphate. It catalyses the reaction a 1,2-diacyl-sn-glycero-3-phospho-(1D-myo-inositol-3-phosphate) + H2O = a 1,2-diacyl-sn-glycero-3-phospho-(1D-myo-inositol) + phosphate. The enzyme catalyses 1,2-dioctanoyl-sn-glycero-3-phospho-(1D-myo-inositol-3,5-bisphosphate) + H2O = 1,2-dioctanoyl-sn-glycero-3-phospho-(1D-myo-inositol-5-phosphate) + phosphate. Its activity is regulated as follows. Interaction with MTMR9 increases phosphatase activity. Its function is as follows. Lipid phosphatase that specifically dephosphorylates the D-3 position of phosphatidylinositol 3-phosphate and phosphatidylinositol 3,5-bisphosphate, generating phosphatidylinositol and phosphatidylinositol 5-phosphate. In complex with MTMR9, negatively regulates autophagy. The chain is Phosphatidylinositol-3,5-bisphosphate 3-phosphatase MTMR8 from Homo sapiens (Human).